The chain runs to 122 residues: Large ribosomal subunit protein uL14 (122 aa).

It belongs to the universal ribosomal protein uL14 family. Part of the 50S ribosomal subunit. Forms a cluster with proteins L3 and L19. In the 70S ribosome, L14 and L19 interact and together make contacts with the 16S rRNA in bridges B5 and B8.

Functionally, binds to 23S rRNA. Forms part of two intersubunit bridges in the 70S ribosome. This is Large ribosomal subunit protein uL14 from Picosynechococcus sp. (strain ATCC 27264 / PCC 7002 / PR-6) (Agmenellum quadruplicatum).